The following is a 367-amino-acid chain: tRNA-specific 2-thiouridylase MnmA (367 aa).

ATP contacts are provided by residues 24-31 (AMSGGVDS) and Leu-50. Cys-115 functions as the Nucleophile in the catalytic mechanism. A disulfide bond links Cys-115 and Cys-211. Gly-139 lines the ATP pocket. The interaction with tRNA stretch occupies residues 161-163 (KDQ). Residue Cys-211 is the Cysteine persulfide intermediate of the active site.

The protein belongs to the MnmA/TRMU family.

It localises to the cytoplasm. It carries out the reaction S-sulfanyl-L-cysteinyl-[protein] + uridine(34) in tRNA + AH2 + ATP = 2-thiouridine(34) in tRNA + L-cysteinyl-[protein] + A + AMP + diphosphate + H(+). In terms of biological role, catalyzes the 2-thiolation of uridine at the wobble position (U34) of tRNA, leading to the formation of s(2)U34. The chain is tRNA-specific 2-thiouridylase MnmA from Ehrlichia canis (strain Jake).